A 203-amino-acid chain; its full sequence is Dephospho-CoA kinase (203 aa).

The 198-residue stretch at 4–201 folds into the DPCK domain; that stretch reads IIGLTGGIGS…RKYLMLARKH (198 aa). 12-17 provides a ligand contact to ATP; sequence GSGKTR.

Belongs to the CoaE family.

The protein resides in the cytoplasm. The enzyme catalyses 3'-dephospho-CoA + ATP = ADP + CoA + H(+). It participates in cofactor biosynthesis; coenzyme A biosynthesis; CoA from (R)-pantothenate: step 5/5. Its function is as follows. Catalyzes the phosphorylation of the 3'-hydroxyl group of dephosphocoenzyme A to form coenzyme A. The polypeptide is Dephospho-CoA kinase (Nitrosomonas europaea (strain ATCC 19718 / CIP 103999 / KCTC 2705 / NBRC 14298)).